A 230-amino-acid polypeptide reads, in one-letter code: Cytidylate kinase (230 aa).

12-20 (GPSGAGKGT) provides a ligand contact to ATP.

It belongs to the cytidylate kinase family. Type 1 subfamily.

Its subcellular location is the cytoplasm. The catalysed reaction is CMP + ATP = CDP + ADP. It catalyses the reaction dCMP + ATP = dCDP + ADP. The chain is Cytidylate kinase from Shewanella piezotolerans (strain WP3 / JCM 13877).